We begin with the raw amino-acid sequence, 276 residues long: Large ribosomal subunit protein uL2 (276 aa).

Positions 225–276 (MNPVDHPHGGGEGRAPVGRKHPVTPWGKPAMGAKTRKKRKLSDKLIVKPRNK) are disordered. Positions 258 to 276 (KTRKKRKLSDKLIVKPRNK) are enriched in basic residues.

It belongs to the universal ribosomal protein uL2 family. In terms of assembly, part of the 50S ribosomal subunit. Forms a bridge to the 30S subunit in the 70S ribosome.

In terms of biological role, one of the primary rRNA binding proteins. Required for association of the 30S and 50S subunits to form the 70S ribosome, for tRNA binding and peptide bond formation. It has been suggested to have peptidyltransferase activity; this is somewhat controversial. Makes several contacts with the 16S rRNA in the 70S ribosome. This Moorella thermoacetica (strain ATCC 39073 / JCM 9320) protein is Large ribosomal subunit protein uL2.